The chain runs to 354 residues: Protein-arginine kinase (354 aa).

The Phosphagen kinase C-terminal domain occupies 24 to 254 (IVLSSRIRLA…QQIIQQEKLA (231 aa)). ATP is bound by residues 27 to 31 (SSRIR), H92, R125, 176 to 180 (RASVM), and 207 to 212 (RGIYGE). Residues 337 to 342 (RDYRRA) carry the RDXXRA motif of the pArg binding pocket involved in allosteric regulation motif.

This sequence belongs to the ATP:guanido phosphotransferase family.

The enzyme catalyses L-arginyl-[protein] + ATP = N(omega)-phospho-L-arginyl-[protein] + ADP + H(+). Its activity is regulated as follows. Appears to be allosterically activated by the binding of pArg-containing polypeptides to the pArg-binding pocket localized in the C-terminal domain of McsB. Its function is as follows. Catalyzes the specific phosphorylation of arginine residues in a large number of proteins. Is part of the bacterial stress response system. Protein arginine phosphorylation has a physiologically important role and is involved in the regulation of many critical cellular processes, such as protein homeostasis, motility, competence, and stringent and stress responses, by regulating gene expression and protein activity. This is Protein-arginine kinase from Bacillus cereus (strain B4264).